A 162-amino-acid polypeptide reads, in one-letter code: NADH-quinone oxidoreductase subunit I 2 (162 aa).

4Fe-4S ferredoxin-type domains lie at 52-82 (LRRYPNGEERCIACKLCEAVCPAQAITIEAG) and 93-122 (ERYDIDMVKCIYCGLCQEACPVDAIVEGPN). [4Fe-4S] cluster contacts are provided by C62, C65, C68, C72, C102, C105, C108, and C112.

This sequence belongs to the complex I 23 kDa subunit family. As to quaternary structure, NDH-1 is composed of 14 different subunits. Subunits NuoA, H, J, K, L, M, N constitute the membrane sector of the complex. [4Fe-4S] cluster serves as cofactor.

The protein resides in the cell inner membrane. It catalyses the reaction a quinone + NADH + 5 H(+)(in) = a quinol + NAD(+) + 4 H(+)(out). Its function is as follows. NDH-1 shuttles electrons from NADH, via FMN and iron-sulfur (Fe-S) centers, to quinones in the respiratory chain. The immediate electron acceptor for the enzyme in this species is believed to be ubiquinone. Couples the redox reaction to proton translocation (for every two electrons transferred, four hydrogen ions are translocated across the cytoplasmic membrane), and thus conserves the redox energy in a proton gradient. This Rhodopseudomonas palustris (strain BisA53) protein is NADH-quinone oxidoreductase subunit I 2.